The sequence spans 325 residues: Acetyl-coenzyme A carboxylase carboxyl transferase subunit alpha (325 aa).

A CoA carboxyltransferase C-terminal domain is found at 44 to 298 (QLEARADQLR…KAAIQDNLQA (255 aa)).

This sequence belongs to the AccA family. In terms of assembly, acetyl-CoA carboxylase is a heterohexamer composed of biotin carboxyl carrier protein (AccB), biotin carboxylase (AccC) and two subunits each of ACCase subunit alpha (AccA) and ACCase subunit beta (AccD).

The protein resides in the cytoplasm. It catalyses the reaction N(6)-carboxybiotinyl-L-lysyl-[protein] + acetyl-CoA = N(6)-biotinyl-L-lysyl-[protein] + malonyl-CoA. It participates in lipid metabolism; malonyl-CoA biosynthesis; malonyl-CoA from acetyl-CoA: step 1/1. Functionally, component of the acetyl coenzyme A carboxylase (ACC) complex. First, biotin carboxylase catalyzes the carboxylation of biotin on its carrier protein (BCCP) and then the CO(2) group is transferred by the carboxyltransferase to acetyl-CoA to form malonyl-CoA. This chain is Acetyl-coenzyme A carboxylase carboxyl transferase subunit alpha, found in Picosynechococcus sp. (strain ATCC 27264 / PCC 7002 / PR-6) (Agmenellum quadruplicatum).